Here is a 1012-residue protein sequence, read N- to C-terminus: Structural polyprotein (1012 aa).

Asp-30 provides a ligand contact to a divalent metal cation. The Peptidase S50 domain maps to 513 to 755 (ADKGYEVVAN…AGRQYHLAMA (243 aa)). The active-site Nucleophile is the Ser-652. Lys-692 is an active-site residue. The interval 970–1012 (MEMKHRNPRRALPKPKPKPNAPTQRPPGRLGRWIRTVSDEDLE) is disordered. Residues 975 to 986 (RNPRRALPKPKP) show a composition bias toward basic residues. An interaction with VP1 protein region spans residues 1003–1012 (IRTVSDEDLE).

Homotrimer. A central divalent metal stabilizes the VP2 trimer. Interacts with host ITGA4/ITGB1. As to quaternary structure, homodimer. Interacts (via C-terminus) with VP1 in the cytoplasm. Interacts with VP2. Post-translationally, specific enzymatic cleavages yield mature proteins. The capsid assembly seems to be regulated by polyprotein processing. The protease VP4 cleaves itself off the polyprotein, thus releasing pre-VP2 and VP3 within the infected cell. During capsid assembly, the C-terminus of pre-VP2 is further processed by VP4, giving rise to VP2, the external capsid protein and three small peptides that all stay closely associated with the capsid.

Its subcellular location is the virion. The protein localises to the host cytoplasm. Functionally, capsid protein VP2 self assembles to form an icosahedral capsid with a T=13 symmetry, about 70 nm in diameter, and consisting of 260 VP2 trimers. The capsid encapsulates the genomic dsRNA. VP2 is also involved in attachment and entry into the host cell by interacting with host ITGA4/ITGB1. The precursor of VP2 plays an important role in capsid assembly. First, pre-VP2 and VP2 oligomers assemble to form a procapsid. Then, the pre-VP2 intermediates may be processed into VP2 proteins by proteolytic cleavage mediated by VP4 to obtain the mature virion. The final capsid is composed of pentamers and hexamers but VP2 has a natural tendency to assemble into all-pentameric structures. Therefore pre-VP2 may be required to allow formation of the hexameric structures. Its function is as follows. Protease VP4 is a serine protease that cleaves the polyprotein into its final products. Pre-VP2 is first partially cleaved, and may be completely processed by VP4 upon capsid maturation. In terms of biological role, capsid protein VP3 plays a key role in virion assembly by providing a scaffold for the capsid made of VP2. May self-assemble to form a T=4-like icosahedral inner-capsid composed of at least 180 trimers. Plays a role in genomic RNA packaging by recruiting VP1 into the capsid and interacting with the dsRNA genome segments to form a ribonucleoprotein complex. Additionally, the interaction of the VP3 C-terminal tail with VP1 removes the inherent structural blockade of the polymerase active site. Thus, VP3 can also function as a transcriptional activator. Functionally, structural peptide 1 is a small peptide derived from pre-VP2 C-terminus. It destabilizes and perforates cell membranes, suggesting a role during entry. Structural peptide 2 is a small peptide derived from pVP2 C-terminus. It is not essential for the virus viability, but viral growth is affected when missing. Its function is as follows. Structural peptide 3 is a small peptide derived from pVP2 C-terminus. It is not essential for the virus viability, but viral growth is affected when missing. In terms of biological role, structural peptide 4 is a small peptide derived from pVP2 C-terminus. It is essential for the virus viability. This Avian infectious bursal disease virus (strain Chicken/Cuba/Soroa/1998) (IBDV) protein is Structural polyprotein.